The primary structure comprises 204 residues: Proteasome subunit beta 2 (204 aa).

Positions 1–6 (MEVLPG) are cleaved as a propeptide — removed in mature form; by autocatalysis. Thr-7 acts as the Nucleophile in catalysis.

The protein belongs to the peptidase T1B family. In terms of assembly, the 20S proteasome core is composed of 14 alpha and 14 beta subunits that assemble into four stacked heptameric rings, resulting in a barrel-shaped structure. The two inner rings, each composed of seven catalytic beta subunits, are sandwiched by two outer rings, each composed of seven alpha subunits. The catalytic chamber with the active sites is on the inside of the barrel. Has a gated structure, the ends of the cylinder being occluded by the N-termini of the alpha-subunits. Is capped at one or both ends by the proteasome regulatory ATPase, PAN.

Its subcellular location is the cytoplasm. The catalysed reaction is Cleavage of peptide bonds with very broad specificity.. The formation of the proteasomal ATPase PAN-20S proteasome complex, via the docking of the C-termini of PAN into the intersubunit pockets in the alpha-rings, triggers opening of the gate for substrate entry. Interconversion between the open-gate and close-gate conformations leads to a dynamic regulation of the 20S proteasome proteolysis activity. Component of the proteasome core, a large protease complex with broad specificity involved in protein degradation. This chain is Proteasome subunit beta 2, found in Thermofilum pendens (strain DSM 2475 / Hrk 5).